The following is a 514-amino-acid chain: 1-pyrroline-5-carboxylate dehydrogenase (514 aa).

Catalysis depends on residues Glu-286 and Cys-320.

Belongs to the aldehyde dehydrogenase family. RocA subfamily.

The enzyme catalyses L-glutamate 5-semialdehyde + NAD(+) + H2O = L-glutamate + NADH + 2 H(+). It participates in amino-acid degradation; L-proline degradation into L-glutamate; L-glutamate from L-proline: step 2/2. The protein is 1-pyrroline-5-carboxylate dehydrogenase of Staphylococcus aureus (strain MRSA252).